Reading from the N-terminus, the 2570-residue chain is Highly reducing polyketide synthase tstA (2570 aa).

Residues 16-443 (AMPIAVVGIG…GANAHVVLEN (428 aa)) enclose the Ketosynthase family 3 (KS3) domain. Residues Cys-191, His-326, and His-366 each act as for beta-ketoacyl synthase activity in the active site. Positions 458–478 (HTRKSATESSGTSTPSNPGPH) are disordered. Residues 464-478 (TESSGTSTPSNPGPH) show a composition bias toward low complexity. A Malonyl-CoA:ACP transacylase (MAT) domain is found at 567 to 898 (FVFTGQGAQW…YSALVRNKNA (332 aa)). The tract at residues 965–1103 (TDLLGVLERN…GLVSVVAPQK (139 aa)) is N-terminal hotdog fold. In terms of domain architecture, PKS/mFAS DH spans 965-1293 (TDLLGVLERN…CATLAREGAD (329 aa)). His-997 serves as the catalytic Proton acceptor; for dehydratase activity. The tract at residues 1133 to 1293 (RRNINVPQFY…CATLAREGAD (161 aa)) is C-terminal hotdog fold. Asp-1198 acts as the Proton donor; for dehydratase activity in catalysis. Positions 1343 to 1645 (LERAAYYMLK…IATSINSNNY (303 aa)) are methyltransferase (CMeT) domain. The region spanning 1866–2178 (GLLDSIFWTD…TGGHMGKLVG (313 aa)) is the Enoyl reductase (ER) domain. The Ketoreductase (KR) domain occupies 2202-2379 (ASYVLIGGLG…ATTIDLGAIS (178 aa)). In terms of domain architecture, Carrier spans 2482-2559 (DASELILGAL…HLATKIAQRS (78 aa)). Ser-2519 is modified (O-(pantetheine 4'-phosphoryl)serine).

Requires pantetheine 4'-phosphate as cofactor.

It participates in secondary metabolite biosynthesis. Functionally, highly reducing polyketide synthase; part of the gene cluster that mediates the biosynthesis of the antihypercholesterolemic agents phomoidrides which are dimeric anhydrides. The pathway begins with the highly reducing polyketide synthase tstA that catalyzes the formation of a C12-fatty acyl-ACP, starting from one acetate and 5 malonate units. The hydrolase tstM is involved in the release of the C12-fatty acyl chain from tstA. The alkylcitrate synthase (ACS) tstJ and the alkylcitrate dehydratase (ACDH) tstI then give rise to decarboxylated monomeric anhydrides by coupling the C12-fatty acyl chain with oxalacetic acid. The cyclase tstC is responsible for the dimerization of the monomeric anhydrides which leads to the production of prephomoidride that contains the characteristic bicyclo[4.3.1]deca-1,6-diene system of phomoidrides. Iterative oxidation catalyzed by the alpha-ketoglutarate-dependent dioxygenase tstK produced then phomoidride A. Finally, the methyltransferase tstE converts phomoidride A to phomoidride B via an acetalization reaction. The phosphatidylethanolamine-binding protein tstB and tstN are not essential for dimerization and their functions have still to be determined. This Talaromyces stipitatus (strain ATCC 10500 / CBS 375.48 / QM 6759 / NRRL 1006) (Penicillium stipitatum) protein is Highly reducing polyketide synthase tstA.